The following is a 341-amino-acid chain: Heme A synthase (341 aa).

The next 8 membrane-spanning stretches (helical) occupy residues 8 to 28, 92 to 112, 126 to 146, 160 to 180, 201 to 221, 256 to 276, 294 to 314, and 315 to 335; these read VIIWLLSGCVLLFLMVVVGGI, FHRFIGRIIGLVFFVPFVYFL, IVLLAMGAFQGFLGWFMVRSG, LHLTFAFITFAYTLWVALDLI, AALLIQIIYGGFVAGLNAGLI, VQFVHRTFAYAVVAVILFLFF, LVVFVFIQFLLGVFTLLYSVP, and LALGLIHQIMAFFLLSAMTYT. Position 260 (histidine 260) interacts with heme. Histidine 321 lines the heme pocket.

The protein belongs to the COX15/CtaA family. Type 2 subfamily. In terms of assembly, interacts with CtaB. Heme b is required as a cofactor.

The protein resides in the cell membrane. The enzyme catalyses Fe(II)-heme o + 2 A + H2O = Fe(II)-heme a + 2 AH2. The protein operates within porphyrin-containing compound metabolism; heme A biosynthesis; heme A from heme O: step 1/1. Catalyzes the conversion of heme O to heme A by two successive hydroxylations of the methyl group at C8. The first hydroxylation forms heme I, the second hydroxylation results in an unstable dihydroxymethyl group, which spontaneously dehydrates, resulting in the formyl group of heme A. The polypeptide is Heme A synthase (Flavobacterium johnsoniae (strain ATCC 17061 / DSM 2064 / JCM 8514 / BCRC 14874 / CCUG 350202 / NBRC 14942 / NCIMB 11054 / UW101) (Cytophaga johnsonae)).